The following is an 82-amino-acid chain: Small ribosomal subunit protein uS17 (82 aa).

It belongs to the universal ribosomal protein uS17 family. As to quaternary structure, part of the 30S ribosomal subunit.

In terms of biological role, one of the primary rRNA binding proteins, it binds specifically to the 5'-end of 16S ribosomal RNA. This chain is Small ribosomal subunit protein uS17, found in Bradyrhizobium sp. (strain BTAi1 / ATCC BAA-1182).